The primary structure comprises 1306 residues: Clustered mitochondria protein homolog (1306 aa).

Residues 1–11 show a composition bias toward low complexity; that stretch reads MAVNNEVNNAA. The disordered stretch occupies residues 1–47; it reads MAVNNEVNNAASETPTDVSSSSQKLATEETALTNGADHEEEDGGEAG. The segment covering 12–33 has biased composition (polar residues); that stretch reads SETPTDVSSSSQKLATEETALT. The Clu domain maps to 336–580; sequence DITRTQENYL…RVTPLDITWM (245 aa). Disordered regions lie at residues 630–689 and 912–956; these read ERKR…QERI and KQSQ…SPAA. Residues 656 to 689 are compositionally biased toward basic and acidic residues; that stretch reads EPAKSEEPTENGELAKKSESDEAAEPSKPDQERI. TPR repeat units follow at residues 1032–1065, 1074–1107, and 1116–1149; these read ARVY…SERT, LLNY…WKVV, and ITTI…CEEV. The segment at 1275 to 1306 is disordered; the sequence is FIEGSDQSNQNKKRPGRSNPKRRGGAAATAGK. Over residues 1285–1298 the composition is skewed to basic residues; sequence NKKRPGRSNPKRRG.

This sequence belongs to the CLU family. May associate with the eukaryotic translation initiation factor 3 (eIF-3) complex.

It localises to the cytoplasm. MRNA-binding protein involved in proper cytoplasmic distribution of mitochondria. The chain is Clustered mitochondria protein homolog from Botryotinia fuckeliana (strain B05.10) (Noble rot fungus).